The sequence spans 357 residues: Protein RecA (357 aa).

69–76 serves as a coordination point for ATP; that stretch reads GPESSGKT. Positions 337–357 are disordered; that stretch reads SANSVAKNNEDDEDEDVEEEE. Residues 346–357 show a composition bias toward acidic residues; sequence EDDEDEDVEEEE.

The protein belongs to the RecA family.

It localises to the cytoplasm. Its function is as follows. Can catalyze the hydrolysis of ATP in the presence of single-stranded DNA, the ATP-dependent uptake of single-stranded DNA by duplex DNA, and the ATP-dependent hybridization of homologous single-stranded DNAs. It interacts with LexA causing its activation and leading to its autocatalytic cleavage. In Nostoc sp. (strain PCC 7120 / SAG 25.82 / UTEX 2576), this protein is Protein RecA.